The following is a 286-amino-acid chain: uncharacterized protein (286 aa).

The segment at residues M1 to A31 is a signal peptide (tat-type signal). Positions 65, 67, 97, 130, 221, and 223 each coordinate a divalent metal cation.

This sequence belongs to the metallophosphoesterase superfamily. It depends on a divalent metal cation as a cofactor. Post-translationally, predicted to be exported by the Tat system. The position of the signal peptide cleavage has not been experimentally proven.

This is an uncharacterized protein from Bacillus subtilis (strain 168).